The primary structure comprises 424 residues: Phosphomethylpyrimidine synthase (424 aa).

Residues asparagine 66, methionine 95, tyrosine 124, histidine 163, 185-187 (SRG), 226-229 (DGMR), and glutamate 265 contribute to the substrate site. A Zn(2+)-binding site is contributed by histidine 269. Phenylalanine 292 is a binding site for substrate. Histidine 333 is a Zn(2+) binding site. Positions 408, 411, and 415 each coordinate [4Fe-4S] cluster.

The protein belongs to the ThiC family. It depends on [4Fe-4S] cluster as a cofactor.

The catalysed reaction is 5-amino-1-(5-phospho-beta-D-ribosyl)imidazole + S-adenosyl-L-methionine = 4-amino-2-methyl-5-(phosphooxymethyl)pyrimidine + CO + 5'-deoxyadenosine + formate + L-methionine + 3 H(+). It participates in cofactor biosynthesis; thiamine diphosphate biosynthesis. Catalyzes the synthesis of the hydroxymethylpyrimidine phosphate (HMP-P) moiety of thiamine from aminoimidazole ribotide (AIR) in a radical S-adenosyl-L-methionine (SAM)-dependent reaction. The chain is Phosphomethylpyrimidine synthase from Thermotoga petrophila (strain ATCC BAA-488 / DSM 13995 / JCM 10881 / RKU-1).